Consider the following 156-residue polypeptide: Small ribosomal subunit protein uS7 (156 aa).

This sequence belongs to the universal ribosomal protein uS7 family. As to quaternary structure, part of the 30S ribosomal subunit. Contacts proteins S9 and S11.

One of the primary rRNA binding proteins, it binds directly to 16S rRNA where it nucleates assembly of the head domain of the 30S subunit. Is located at the subunit interface close to the decoding center, probably blocks exit of the E-site tRNA. The sequence is that of Small ribosomal subunit protein uS7 from Picosynechococcus sp. (strain ATCC 27264 / PCC 7002 / PR-6) (Agmenellum quadruplicatum).